Consider the following 579-residue polypeptide: Zinc finger-containing ubiquitin peptidase 1 (579 aa).

The segment at 2-25 (LSCDICGETVSSEPDMKAHLLIVH) adopts a C2H2-type 1 zinc-finger fold. The C2H2-type 2; atypical zinc finger occupies 30–53 (VICPFCKLSGVNYDEMCFHIETAH). C2H2-type zinc fingers lie at residues 155–178 (PECP…KTKH) and 194–216 (YDCP…VDLH). Positions 227-249 (NRVQCSRDLELAQQLQQEEDRKR) are MIU. Positions 250–275 (RSEESRQEMEEFQKLQRQYGLDNSGG) are zUBD/ZHA. Residue K263 is modified to N6-acetyllysine. The Nucleophile role is filled by C361. H492 acts as the Proton acceptor in catalysis. D513 is an active-site residue.

The protein belongs to the peptidase C78 family. ZUFSP subfamily. Interacts with RPA1 and RPA2.

It localises to the cytoplasm. Its subcellular location is the nucleus. It carries out the reaction Thiol-dependent hydrolysis of ester, thioester, amide, peptide and isopeptide bonds formed by the C-terminal Gly of ubiquitin (a 76-residue protein attached to proteins as an intracellular targeting signal).. Deubiquitinase with endodeubiquitinase activity that specifically interacts with and cleaves 'Lys-63'-linked long polyubiquitin chains. Shows only weak activity against 'Lys-11' and 'Lys-48'-linked chains. Plays an important role in genome stability pathways, functioning to prevent spontaneous DNA damage and also promote cellular survival in response to exogenous DNA damage. Modulates the ubiquitination status of replication protein A (RPA) complex proteins in response to replication stress. In Bos taurus (Bovine), this protein is Zinc finger-containing ubiquitin peptidase 1.